A 137-amino-acid chain; its full sequence is CDGSH iron-sulfur domain-containing protein 3, mitochondrial (137 aa).

An N6-acetyllysine; alternate modification is found at Lys65. At Lys65 the chain carries N6-succinyllysine; alternate. [2Fe-2S] cluster contacts are provided by Cys70, Cys72, Cys81, and His85. Lys96 is modified (N6-acetyllysine). Positions 108, 110, 119, and 123 each coordinate [2Fe-2S] cluster. Position 124 is an N6-acetyllysine; alternate (Lys124). Lys124 is modified (N6-succinyllysine; alternate).

This sequence belongs to the CISD protein family. Monomer. Requires [2Fe-2S] cluster as cofactor.

It is found in the mitochondrion. Its function is as follows. Can transfer its iron-sulfur clusters to the apoferrodoxins FDX1 and FDX2. Contributes to mitochondrial iron homeostasis and in maintaining normal levels of free iron and reactive oxygen species, and thereby contributes to normal mitochondrial function. The sequence is that of CDGSH iron-sulfur domain-containing protein 3, mitochondrial (Cisd3) from Mus musculus (Mouse).